A 312-amino-acid polypeptide reads, in one-letter code: Pectin lyase (312 aa).

Arg201 is a catalytic residue. The segment at 254-274 is disordered; sequence GSGTFTDTNSVPPITNQKSPK. Over residues 256–274 the composition is skewed to polar residues; the sequence is GTFTDTNSVPPITNQKSPK.

This sequence belongs to the polysaccharide lyase 1 family.

The catalysed reaction is Eliminative cleavage of (1-&gt;4)-alpha-D-galacturonan methyl ester to give oligosaccharides with 4-deoxy-6-O-methyl-alpha-D-galact-4-enuronosyl groups at their non-reducing ends.. The chain is Pectin lyase (pnl) from Pseudomonas marginalis (Pseudomonas panacis).